The chain runs to 406 residues: 1-deoxy-D-xylulose 5-phosphate reductoisomerase (406 aa).

The NADPH site is built by threonine 21, glycine 22, serine 23, isoleucine 24, glycine 47, glutamine 50, and asparagine 127. Lysine 128 serves as a coordination point for 1-deoxy-D-xylulose 5-phosphate. An NADPH-binding site is contributed by glutamate 129. Position 151 (aspartate 151) interacts with Mn(2+). Serine 152, glutamate 153, serine 177, and histidine 200 together coordinate 1-deoxy-D-xylulose 5-phosphate. Glutamate 153 is a binding site for Mn(2+). Glycine 206 is a binding site for NADPH. 1-deoxy-D-xylulose 5-phosphate contacts are provided by serine 213, asparagine 218, lysine 219, and glutamate 222. Glutamate 222 provides a ligand contact to Mn(2+).

Belongs to the DXR family. Mg(2+) serves as cofactor. Requires Mn(2+) as cofactor.

The catalysed reaction is 2-C-methyl-D-erythritol 4-phosphate + NADP(+) = 1-deoxy-D-xylulose 5-phosphate + NADPH + H(+). It functions in the pathway isoprenoid biosynthesis; isopentenyl diphosphate biosynthesis via DXP pathway; isopentenyl diphosphate from 1-deoxy-D-xylulose 5-phosphate: step 1/6. Catalyzes the NADPH-dependent rearrangement and reduction of 1-deoxy-D-xylulose-5-phosphate (DXP) to 2-C-methyl-D-erythritol 4-phosphate (MEP). In Mycobacterium leprae (strain Br4923), this protein is 1-deoxy-D-xylulose 5-phosphate reductoisomerase.